The following is a 319-amino-acid chain: Mas-related G-protein coupled receptor member D (319 aa).

At 1 to 30 the chain is on the extracellular side; sequence MNYTPYSSPAPGLTISPTMDPVTWVYFSVT. Residues 31–51 traverse the membrane as a helical segment; sequence FLAMATCVCGIVGNSMVIWLL. Over 52 to 64 the chain is Cytoplasmic; the sequence is SFHRVQRSPFCTY. The chain crosses the membrane as a helical span at residues 65–85; it reads VLNLAVADLLFLLCMASLLSL. At 86–92 the chain is on the extracellular side; it reads ETGPLLT. Residues 93–113 form a helical membrane-spanning segment; that stretch reads ASTSARVYEGMKRIKYFAYTA. Over 114-144 the chain is Cytoplasmic; the sequence is GLSLLTAISTQRCLSVLFPIWYKCHRPQHLS. The helical transmembrane segment at 145–165 threads the bilayer; sequence GVVCGVLWALALLMNFLASFF. At 166–184 the chain is on the extracellular side; that stretch reads CVQFWHPDKYQCFKVDMVF. A helical transmembrane segment spans residues 185–205; sequence NSLILGIFMPVMVLTSAIIFI. Residues 206–220 are Cytoplasmic-facing; that stretch reads RMRKNSLLQRRQPRR. Residues 221-241 form a helical membrane-spanning segment; sequence LYVVILTSVLVFLTCSLPLGI. Residues 242 to 260 lie on the Extracellular side of the membrane; it reads NWFLLYWVELPQAVRLLYV. The helical transmembrane segment at 261–281 threads the bilayer; that stretch reads CSSRFSSSLSSSANPVIYFLV. Topologically, residues 282–319 are cytoplasmic; sequence GSQKSHRLQESLGAVLGRALQDEPEGRETPSTCTNDGV.

This sequence belongs to the G-protein coupled receptor 1 family. Mas subfamily. In terms of tissue distribution, co-expressed in the small diameter neurons with P2X3 and VR1 in dorsal root ganglia.

The protein localises to the cell membrane. Its function is as follows. May regulate nociceptor function and/or development, including the sensation or modulation of pain. Functions as a specific membrane receptor for beta-alanine. The receptor couples with G-protein G(q) and G(i). This Rattus norvegicus (Rat) protein is Mas-related G-protein coupled receptor member D (Mrgprd).